The following is a 273-amino-acid chain: Neuferricin (273 aa).

Positions 1 to 22 (MLGYLAAAALCLAAVLLMRLDH) are cleaved as a signal peptide. One can recognise a Cytochrome b5 heme-binding domain in the interval 44–143 (GRLMSKEELS…QNYITIGKLT (100 aa)).

Belongs to the cytochrome b5 family. MAPR subfamily.

It localises to the secreted. Functionally, heme-binding protein which promotes neuronal but not astrocyte differentiation. In Xenopus tropicalis (Western clawed frog), this protein is Neuferricin (cyb5d2).